We begin with the raw amino-acid sequence, 245 residues long: Aliphatic sulfonates import ATP-binding protein SsuB 1 (245 aa).

One can recognise an ABC transporter domain in the interval V8–Y223. G40 to T47 contacts ATP.

This sequence belongs to the ABC transporter superfamily. Aliphatic sulfonates importer (TC 3.A.1.17.2) family. In terms of assembly, the complex is composed of two ATP-binding proteins (SsuB), two transmembrane proteins (SsuC) and a solute-binding protein (SsuA).

Its subcellular location is the cell membrane. It catalyses the reaction ATP + H2O + aliphatic sulfonate-[sulfonate-binding protein]Side 1 = ADP + phosphate + aliphatic sulfonateSide 2 + [sulfonate-binding protein]Side 1.. Functionally, part of the ABC transporter complex SsuABC involved in aliphatic sulfonates import. Responsible for energy coupling to the transport system. This Nocardia farcinica (strain IFM 10152) protein is Aliphatic sulfonates import ATP-binding protein SsuB 1.